The chain runs to 476 residues: Aspartyl/glutamyl-tRNA(Asn/Gln) amidotransferase subunit B (476 aa).

It belongs to the GatB/GatE family. GatB subfamily. As to quaternary structure, heterotrimer of A, B and C subunits.

The enzyme catalyses L-glutamyl-tRNA(Gln) + L-glutamine + ATP + H2O = L-glutaminyl-tRNA(Gln) + L-glutamate + ADP + phosphate + H(+). The catalysed reaction is L-aspartyl-tRNA(Asn) + L-glutamine + ATP + H2O = L-asparaginyl-tRNA(Asn) + L-glutamate + ADP + phosphate + 2 H(+). Functionally, allows the formation of correctly charged Asn-tRNA(Asn) or Gln-tRNA(Gln) through the transamidation of misacylated Asp-tRNA(Asn) or Glu-tRNA(Gln) in organisms which lack either or both of asparaginyl-tRNA or glutaminyl-tRNA synthetases. The reaction takes place in the presence of glutamine and ATP through an activated phospho-Asp-tRNA(Asn) or phospho-Glu-tRNA(Gln). This is Aspartyl/glutamyl-tRNA(Asn/Gln) amidotransferase subunit B from Clostridium botulinum (strain Eklund 17B / Type B).